We begin with the raw amino-acid sequence, 147 residues long: Allograft inflammatory factor 1 (147 aa).

Residue serine 2 is modified to N-acetylserine. N6-acetyllysine is present on lysine 11. Serine 39 carries the post-translational modification Phosphoserine. One can recognise an EF-hand 1 domain in the interval 45–80 (SKLEGFKEKYMEFDLNGNGDIDIMSLKRMLEKLGVP). Ca(2+) contacts are provided by aspartate 58, asparagine 60, asparagine 62, aspartate 64, threonine 100, and aspartate 105. The region spanning 81–115 (KTHLELKKLIGEVSSGSGETFSYPDFLRMMLGKRS) is the EF-hand 2; degenerate domain. The tract at residues 128–147 (AREKEKPTGPPAKKAISELP) is disordered.

As to quaternary structure, homodimer (Potential). Monomer. Interacts with LCP1. Phosphorylated on serine residues. In terms of tissue distribution, detected in T-lymphocytes and peripheral blood mononuclear cells.

Its subcellular location is the cytoplasm. The protein resides in the cytoskeleton. It is found in the cell projection. The protein localises to the ruffle membrane. It localises to the phagocytic cup. Its function is as follows. Actin-binding protein that enhances membrane ruffling and RAC activation. Enhances the actin-bundling activity of LCP1. Binds calcium. Plays a role in RAC signaling and in phagocytosis. May play a role in macrophage activation and function. Promotes the proliferation of vascular smooth muscle cells and of T-lymphocytes. Enhances lymphocyte migration. Plays a role in vascular inflammation. The polypeptide is Allograft inflammatory factor 1 (AIF1) (Homo sapiens (Human)).